The following is a 257-amino-acid chain: Pyridoxine 5'-phosphate synthase (257 aa).

3-amino-2-oxopropyl phosphate is bound at residue N6. Residue 8–9 (DH) participates in 1-deoxy-D-xylulose 5-phosphate binding. Position 17 (R17) interacts with 3-amino-2-oxopropyl phosphate. Residue H42 is the Proton acceptor of the active site. R44 and H49 together coordinate 1-deoxy-D-xylulose 5-phosphate. The active-site Proton acceptor is the E69. Residue T99 coordinates 1-deoxy-D-xylulose 5-phosphate. The active-site Proton donor is H211. 3-amino-2-oxopropyl phosphate contacts are provided by residues G212 and 233 to 234 (GQ).

The protein belongs to the PNP synthase family. In terms of assembly, homooctamer; tetramer of dimers.

It localises to the cytoplasm. The catalysed reaction is 3-amino-2-oxopropyl phosphate + 1-deoxy-D-xylulose 5-phosphate = pyridoxine 5'-phosphate + phosphate + 2 H2O + H(+). It participates in cofactor biosynthesis; pyridoxine 5'-phosphate biosynthesis; pyridoxine 5'-phosphate from D-erythrose 4-phosphate: step 5/5. In terms of biological role, catalyzes the complicated ring closure reaction between the two acyclic compounds 1-deoxy-D-xylulose-5-phosphate (DXP) and 3-amino-2-oxopropyl phosphate (1-amino-acetone-3-phosphate or AAP) to form pyridoxine 5'-phosphate (PNP) and inorganic phosphate. The chain is Pyridoxine 5'-phosphate synthase from Campylobacter fetus subsp. fetus (strain 82-40).